The sequence spans 363 residues: MGSLAAEKTVTGWAARDASGHLTPYNYTLRKTGPEDVVVKVLYCGICHTDIHQAKNHLGASKYPMVPGHEVVGEVVEVGPEVTKYSAGDVVGVGVIVGCCRECHPCKANVEQYCNKRIWSYNDVYTDGRPTQGGFASAMVVDQKFVVKIPAGLAPEQAAPLLCAGLTVYSPLKHFGLMSPGLRGGVLGLGGVGHMGVKVAKSMGHHVTVISSSARKRGEAMDDLGADAYLVSSDAAAMAAAGDSLDYIIDTVPVHHPLEPYLALLKLDGKLILMGVINQPLSFISPMVMLGRKAITGSFIGSMAETEEVLNFCVDKGLTSQIEVVKMDYVNQALERLERNDVRYRFVVDVAGSNIDDADAPPA.

Cys-47 is a binding site for Zn(2+). Position 49 (Thr-49) interacts with NADP(+). His-69, Glu-70, Cys-100, Cys-103, Cys-106, Cys-114, and Cys-163 together coordinate Zn(2+). NADP(+) contacts are provided by residues Thr-167, Gly-188–Gly-193, Ser-211–Lys-216, Thr-251, Gly-275, and Ser-298–Ile-300.

It belongs to the zinc-containing alcohol dehydrogenase family. Homodimer. The cofactor is Zn(2+). In terms of tissue distribution, expressed in roots behind the root tips in the pericycle region and layer of cortical cells adjacent to the exodermis. Expressed in vascular bundles and lateral veins of leaf sheaths and blades. Expressed in the vicinity of vascular bundles in the first internode below the inflorescence. Highly expressed in the culm.

The enzyme catalyses (E)-cinnamyl alcohol + NADP(+) = (E)-cinnamaldehyde + NADPH + H(+). It catalyses the reaction (E)-coniferol + NADP(+) = (E)-coniferaldehyde + NADPH + H(+). The catalysed reaction is (E)-sinapyl alcohol + NADP(+) = (E)-sinapaldehyde + NADPH + H(+). It carries out the reaction (E)-4-coumaroyl alcohol + NADP(+) = (E)-4-coumaraldehyde + NADPH + H(+). The enzyme catalyses (E)-caffeyl alcohol + NADP(+) = (E)-caffeyl aldehyde + NADPH + H(+). It functions in the pathway aromatic compound metabolism; phenylpropanoid biosynthesis. Functionally, involved in lignin biosynthesis. Catalyzes the final step specific for the production of lignin monomers. Catalyzes the NADPH-dependent reduction of coniferaldehyde and sinapaldehyde to their respective alcohols. Plays the major role in monolignol biosynthesis. Functions cooperatively with COMT in the culm internodes for the biosynthesis of monolignols, the lignin precursors. May be involved in lignin biosynthesis in leaves and roots. This Oryza sativa subsp. japonica (Rice) protein is Cinnamyl alcohol dehydrogenase 2.